Reading from the N-terminus, the 609-residue chain is Dynamin-like protein 2 (609 aa).

The inserts into assembly domain of DLP1, required for tetramerization stretch occupies residues 1–16 (MQINLLNDFIKAYENT). Residues 17–25 (YSVSFDDSF) form a linker region. Residues 63–310 (NIAIIGQFSS…FVGIFDRLLN (248 aa)) enclose the Dynamin-type G domain. Residues 68 to 75 (GQFSSGKS) form a G1 motif region. A GDP-binding site is contributed by 72–76 (SGKSS). Residues 93 to 95 (PVT) are G2 motif. The tract at residues 158-161 (DTPG) is G3 motif. Residues 216–219 (NQKD) are G4 motif.

The protein belongs to the TRAFAC class dynamin-like GTPase superfamily. Dynamin/Fzo/YdjA family. Forms a 2:2 heterotetramer with DLP1. DLP2 forms a central back-to-back dimer flanked on each side by a DLP1 subunit. In the crystal structures the 2 DLP1 subunits are in very different conformations.

The protein resides in the cytoplasm. Its subcellular location is the cytosol. It carries out the reaction GTP + H2O = GDP + phosphate + H(+). Functionally, the heterotetrameric DLP1(2)-DLP2(2) complex tethers liposomes and may mediate their fusion. Initial binding is probably mediated by DLP1, while DLP2 couples DLP1 subunits and increases the effective reach of the complex up to 45 nm. The role of the nucleotide is unknown. This subunit alone very weakly binds to liposomes; GTP, GDP, GMPPCP and GMPPNP do not change heterotetramer binding. Tetramerization is required for GTPase activity, suggesting the GTPase domains (dynamin-type G) from DLP1 and DLP2 must dimerize to reconstitute the GTPase active site. This Campylobacter jejuni subsp. jejuni serotype O:23/36 (strain 81-176) protein is Dynamin-like protein 2.